The sequence spans 176 residues: uncharacterized protein (176 aa).

An N-terminal signal peptide occupies residues 1 to 22; sequence MKYNNIIFLGLCLGLTTYSALS. A disulfide bond links Cys-38 and Cys-78.

The protein belongs to the fimbrial protein family.

The protein resides in the fimbrium. This is an uncharacterized protein from Escherichia coli (strain K12).